A 40-amino-acid polypeptide reads, in one-letter code: RapK inhibitor (40 aa).

2 propeptides span residues Met-1–Ala-34 and Gly-40.

This sequence belongs to the Phr family. In terms of processing, contains a predicted signal peptide cleavage site in the N-terminal region, however the propeptide is probably only subject to processing events at the ends of the mature peptide.

The protein localises to the secreted. It localises to the cytoplasm. Signaling molecule involved in the regulation of genetic competence development. Secreted during production, but the mature peptide acts intracellularly, indicating that it needs to be imported into the cell to function. Stimulates expression of the genes controlled by ComA, a transcriptional factor that regulates the development of genetic competence. Acts by inhibiting RapK, which regulates the activity of ComA. The sequence is that of RapK inhibitor (phrK) from Bacillus subtilis (strain 168).